A 179-amino-acid chain; its full sequence is Crossover junction endodeoxyribonuclease RuvC (179 aa).

Residues aspartate 7 and glutamate 67 contribute to the active site. Positions 7 and 67 each coordinate Mn(2+). Positions 68–74 (DQILRRQ) match the DNA-binding loop motif. Catalysis depends on residues histidine 139 and aspartate 142. Residue histidine 139 coordinates Mn(2+).

It belongs to the RuvC family. As to quaternary structure, homodimer which binds Holliday junction (HJ) DNA. The HJ becomes 2-fold symmetrical on binding to RuvC with unstacked arms; it has a different conformation from HJ DNA in complex with RuvA. In the full resolvosome a probable DNA-RuvA(4)-RuvB(12)-RuvC(2) complex forms which resolves the HJ. Mn(2+) is required as a cofactor.

The protein localises to the cytoplasm. The catalysed reaction is Endonucleolytic cleavage at a junction such as a reciprocal single-stranded crossover between two homologous DNA duplexes (Holliday junction).. Functionally, the RuvA-RuvB-RuvC complex processes Holliday junction (HJ) DNA during genetic recombination and DNA repair. Endonuclease that resolves HJ intermediates. Cleaves cruciform DNA by making single-stranded nicks across the HJ at symmetrical positions within the homologous arms, probably yielding a 5'-phosphate and a 3'-hydroxyl group; requires a central core of homology in the junction. The consensus cleavage sequence is 5'-(G/C)TC(C/G)-3' (a different site than E.coli); cleavage occurs on the 3'-side of the TC dinucleotide at the point of strand exchange. Also resolves nicked HJ intermediates, replication forks and Y-junction DNA in vitro. HJ branch migration catalyzed by RuvA-RuvB allows RuvC to scan DNA until it finds its consensus sequence, where it cleaves and resolves the cruciform DNA. Binds HJ DNA independently of homologous core or consensus sequence; Mn(2+) is not essential for binding but improves it, while &gt;1.0 mM Mg(2+) inhibit binding. Also binds Y-junction DNA less well. Requires a homologous core to cleave DNA. Another study shows divalent cations (Mn(2+), Mg(2+) and Ca(2+), tested up to 5.0 mM) improve DNA binding considerably over binding in their absence. The polypeptide is Crossover junction endodeoxyribonuclease RuvC (Deinococcus radiodurans (strain ATCC 13939 / DSM 20539 / JCM 16871 / CCUG 27074 / LMG 4051 / NBRC 15346 / NCIMB 9279 / VKM B-1422 / R1)).